A 141-amino-acid chain; its full sequence is MVDERDKIILDILSKDARTPFTEIAKILGISETAVRKRVKALEEKGIIEGYTIKINPKKLGYSLVTITGVDTRPEKLFEVAEKLKEFEFVRELYLSSGDHMIMAVIWAKDGEDLADIISNKIGKIDGVTKVCPAIILERLK.

The HTH asnC-type domain maps to 2 to 63; the sequence is VDERDKIILD…KINPKKLGYS (62 aa). The H-T-H motif DNA-binding region spans 21-40; that stretch reads FTEIAKILGISETAVRKRVK.

In terms of assembly, homooctamer; tetramer of dimers.

Its function is as follows. DNA-binding protein that negatively regulates its own transcription. Interferes with RNA polymerase (RNAP) recruitment by inhibiting the association of RNAP with the TBP-TFB promoter complex. In Pyrococcus abyssi (strain GE5 / Orsay), this protein is HTH-type transcriptional regulator LrpA (lrpA).